The following is a 269-amino-acid chain: Cytochrome c oxidase subunit 3 (269 aa).

A run of 7 helical transmembrane segments spans residues 7 to 29, 51 to 71, 90 to 110, 127 to 147, 167 to 187, 205 to 225, and 247 to 267; these read GYLQ…TSFS, IILS…DIIA, GFLL…WAYL, VGID…ILLA, TLYG…FQFL, FYSL…MLVI, and ILYL…VYWW.

Belongs to the cytochrome c oxidase subunit 3 family. As to quaternary structure, component of the cytochrome c oxidase (complex IV, CIV), a multisubunit enzyme composed of a catalytic core of 3 subunits and several supernumerary subunits. The complex exists as a monomer or a dimer and forms supercomplexes (SCs) in the inner mitochondrial membrane with ubiquinol-cytochrome c oxidoreductase (cytochrome b-c1 complex, complex III, CIII).

It localises to the mitochondrion inner membrane. It catalyses the reaction 4 Fe(II)-[cytochrome c] + O2 + 8 H(+)(in) = 4 Fe(III)-[cytochrome c] + 2 H2O + 4 H(+)(out). Component of the cytochrome c oxidase, the last enzyme in the mitochondrial electron transport chain which drives oxidative phosphorylation. The respiratory chain contains 3 multisubunit complexes succinate dehydrogenase (complex II, CII), ubiquinol-cytochrome c oxidoreductase (cytochrome b-c1 complex, complex III, CIII) and cytochrome c oxidase (complex IV, CIV), that cooperate to transfer electrons derived from NADH and succinate to molecular oxygen, creating an electrochemical gradient over the inner membrane that drives transmembrane transport and the ATP synthase. Cytochrome c oxidase is the component of the respiratory chain that catalyzes the reduction of oxygen to water. Electrons originating from reduced cytochrome c in the intermembrane space (IMS) are transferred via the dinuclear copper A center (CU(A)) of subunit 2 and heme A of subunit 1 to the active site in subunit 1, a binuclear center (BNC) formed by heme A3 and copper B (CU(B)). The BNC reduces molecular oxygen to 2 water molecules using 4 electrons from cytochrome c in the IMS and 4 protons from the mitochondrial matrix. The protein is Cytochrome c oxidase subunit 3 (COX3) of Candida parapsilosis (Yeast).